The primary structure comprises 365 residues: Chorismate synthase (365 aa).

Arg47 provides a ligand contact to NADP(+). Residues Arg124–Ser126, Gly287, Lys302–Thr306, and Arg328 each bind FMN.

The protein belongs to the chorismate synthase family. Homotetramer. It depends on FMNH2 as a cofactor.

It catalyses the reaction 5-O-(1-carboxyvinyl)-3-phosphoshikimate = chorismate + phosphate. Its pathway is metabolic intermediate biosynthesis; chorismate biosynthesis; chorismate from D-erythrose 4-phosphate and phosphoenolpyruvate: step 7/7. Catalyzes the anti-1,4-elimination of the C-3 phosphate and the C-6 proR hydrogen from 5-enolpyruvylshikimate-3-phosphate (EPSP) to yield chorismate, which is the branch point compound that serves as the starting substrate for the three terminal pathways of aromatic amino acid biosynthesis. This reaction introduces a second double bond into the aromatic ring system. In Prochlorococcus marinus (strain AS9601), this protein is Chorismate synthase.